We begin with the raw amino-acid sequence, 780 residues long: WD repeat-containing protein 27 (780 aa).

13 WD repeats span residues 3 to 56 (TPPE…VWSS), 61 to 100 (HQLLTLQGHHQLITAVVFGNQIDPLLLCSASEDYIIMWNV), 111 to 150 (LTPRGTILGSLLQTVLCLRFSLDDRAIAVCAGNKISVMDV), 154 to 193 (SVLVELKGHQGSVTAVEFCPWQAHTLISVSEDRSFKVWDF), 200 to 236 (YSSSILTAYPLLNLLINEENQQLVTGSADGQLWIFSL), 291 to 335 (FPIL…LASF), 342 to 385 (HFKE…VLEI), 500 to 540 (NLSR…VFNA), 544 to 582 (GPPAAFSGHDGAVSTICWSHDKRWLLSTGRDRTLRVWSV), 588 to 639 (MLLL…RYKP), 644 to 685 (KPIF…VFDL), 691 to 738 (AAVL…LWDL), and 752 to 779 (AFCTVLQDTQIRLLKWPSTQQLLSLSQP).

The protein is WD repeat-containing protein 27 (Wdr27) of Mus musculus (Mouse).